The following is a 607-amino-acid chain: Glycosyltransferase 25 family member (607 aa).

An N-terminal signal peptide occupies residues 1–22; sequence MKPVSCVGLLVLLVGVLVTVKG. N-linked (GlcNAc...) asparagine glycans are attached at residues Asn226, Asn254, Asn514, and Asn565. The tract at residues 566–607 is disordered; that stretch reads DTSDSSAEKKGDKEQLSSKTLMDSTISRDEHELSVANRKSEL. Basic and acidic residues-rich tracts occupy residues 571 to 581 and 591 to 607; these read SAEKKGDKEQL and ISRD…KSEL. The Prevents secretion from ER signature appears at 604-607; the sequence is KSEL.

This sequence belongs to the glycosyltransferase 25 family.

It is found in the endoplasmic reticulum lumen. This Aedes aegypti (Yellowfever mosquito) protein is Glycosyltransferase 25 family member.